Consider the following 434-residue polypeptide: Enolase (434 aa).

Residue glutamine 163 coordinates (2R)-2-phosphoglycerate. Glutamate 205 acts as the Proton donor in catalysis. 3 residues coordinate Mg(2+): aspartate 242, glutamate 289, and aspartate 316. Positions 341, 370, 371, and 392 each coordinate (2R)-2-phosphoglycerate. Catalysis depends on lysine 341, which acts as the Proton acceptor.

It belongs to the enolase family. Requires Mg(2+) as cofactor.

It is found in the cytoplasm. It localises to the secreted. The protein resides in the cell surface. The enzyme catalyses (2R)-2-phosphoglycerate = phosphoenolpyruvate + H2O. Its pathway is carbohydrate degradation; glycolysis; pyruvate from D-glyceraldehyde 3-phosphate: step 4/5. Catalyzes the reversible conversion of 2-phosphoglycerate (2-PG) into phosphoenolpyruvate (PEP). It is essential for the degradation of carbohydrates via glycolysis. The protein is Enolase of Lacticaseibacillus casei (strain BL23) (Lactobacillus casei).